Consider the following 524-residue polypeptide: 2-isopropylmalate synthase (524 aa).

The region spanning 12–274 (VIIFDTTLRD…WNRIESKMLT (263 aa)) is the Pyruvate carboxyltransferase domain. 4 residues coordinate Mn(2+): Asp-21, His-209, His-211, and Asn-245. Positions 398-524 (RLKSLTVIAG…QDAPAVAVAG (127 aa)) are regulatory domain.

This sequence belongs to the alpha-IPM synthase/homocitrate synthase family. LeuA type 1 subfamily. In terms of assembly, homodimer. It depends on Mn(2+) as a cofactor.

Its subcellular location is the cytoplasm. The enzyme catalyses 3-methyl-2-oxobutanoate + acetyl-CoA + H2O = (2S)-2-isopropylmalate + CoA + H(+). It functions in the pathway amino-acid biosynthesis; L-leucine biosynthesis; L-leucine from 3-methyl-2-oxobutanoate: step 1/4. Functionally, catalyzes the condensation of the acetyl group of acetyl-CoA with 3-methyl-2-oxobutanoate (2-ketoisovalerate) to form 3-carboxy-3-hydroxy-4-methylpentanoate (2-isopropylmalate). The chain is 2-isopropylmalate synthase from Rhodopseudomonas palustris (strain BisB5).